We begin with the raw amino-acid sequence, 348 residues long: NADH-ubiquinone oxidoreductase chain 2 (348 aa).

10 consecutive transmembrane segments (helical) span residues 2 to 22 (SPYV…LTLF), 26 to 46 (WLMA…MMTY), 55 to 75 (AAIK…FAII), 96 to 116 (VLMT…FWVP), 149 to 169 (LNMK…GWGG), 178 to 198 (ILAY…MINP), 199 to 219 (SLAL…FLML), 242 to 262 (TAIL…GFMP), 276 to 296 (IIMA…YMRI), and 323 to 343 (INII…TPLL).

This sequence belongs to the complex I subunit 2 family. Core subunit of respiratory chain NADH dehydrogenase (Complex I) which is composed of 45 different subunits. Interacts with TMEM242.

The protein resides in the mitochondrion inner membrane. It carries out the reaction a ubiquinone + NADH + 5 H(+)(in) = a ubiquinol + NAD(+) + 4 H(+)(out). In terms of biological role, core subunit of the mitochondrial membrane respiratory chain NADH dehydrogenase (Complex I) that is believed to belong to the minimal assembly required for catalysis. Complex I functions in the transfer of electrons from NADH to the respiratory chain. The immediate electron acceptor for the enzyme is believed to be ubiquinone. The protein is NADH-ubiquinone oxidoreductase chain 2 of Osphranter robustus (Wallaroo).